The primary structure comprises 397 residues: L-cysteine desulfidase (397 aa).

Residue Cys23 is the Proton acceptor of the active site. Residues Cys288, Cys330, and Cys337 each contribute to the [4Fe-4S] cluster site.

The protein belongs to the L-cysteine desulfidase family. In terms of assembly, homotrimer. [4Fe-4S] cluster is required as a cofactor.

It carries out the reaction L-cysteine + H2O = hydrogen sulfide + pyruvate + NH4(+) + H(+). Its function is as follows. Catalyzes the cleavage of L-cysteine to form 2-aminoprop-2-enoate and sulfide. The former then spontaneously hydrolyzes to pyruvate and NH(3). May be responsible for the production of sulfide required for the biosynthesis of iron-sulfur centers in this archaea. The sequence is that of L-cysteine desulfidase from Methanococcus maripaludis (strain C7 / ATCC BAA-1331).